The primary structure comprises 29 residues: Pyridoxal 5'-phosphate synthase subunit PdxS (29 aa).

This sequence belongs to the PdxS/SNZ family. As to quaternary structure, in the presence of PdxT, forms a dodecamer of heterodimers.

The catalysed reaction is aldehydo-D-ribose 5-phosphate + D-glyceraldehyde 3-phosphate + L-glutamine = pyridoxal 5'-phosphate + L-glutamate + phosphate + 3 H2O + H(+). It functions in the pathway cofactor biosynthesis; pyridoxal 5'-phosphate biosynthesis. Its function is as follows. Catalyzes the formation of pyridoxal 5'-phosphate from ribose 5-phosphate (RBP), glyceraldehyde 3-phosphate (G3P) and ammonia. The ammonia is provided by the PdxT subunit. Can also use ribulose 5-phosphate and dihydroxyacetone phosphate as substrates, resulting from enzyme-catalyzed isomerization of RBP and G3P, respectively. This is Pyridoxal 5'-phosphate synthase subunit PdxS from Clostridium pasteurianum.